The chain runs to 681 residues: Calpain-C (681 aa).

Residues leucine 18–aspartate 331 enclose the Calpain catalytic domain. Residues threonine 332–serine 481 form a domain III region. The linker stretch occupies residues cysteine 482–cysteine 514. Residues glutamine 515–cysteine 681 are domain IV. Residues alanine 552–tryptophan 587 enclose the EF-hand domain. Residues aspartate 565, serine 567, serine 569, and arginine 571 each coordinate Ca(2+).

Belongs to the peptidase C2 family. In terms of tissue distribution, localized to the salivary glands in the larva.

The protein resides in the cytoplasm. Its function is as follows. Not known; does not seem to have protease activity. In Drosophila melanogaster (Fruit fly), this protein is Calpain-C.